The sequence spans 35 residues: Photosystem II reaction center protein M (35 aa).

N-formylmethionine is present on M1. The helical transmembrane segment at 7-28 (GFIASILFVLVPTVFLLILFIQ) threads the bilayer.

This sequence belongs to the PsbM family. PSII is composed of 1 copy each of membrane proteins PsbA, PsbB, PsbC, PsbD, PsbE, PsbF, PsbH, PsbI, PsbJ, PsbK, PsbL, PsbM, PsbT, PsbX, PsbY, PsbZ, Psb30/Ycf12, peripheral proteins PsbO, CyanoQ (PsbQ), PsbU, PsbV and a large number of cofactors. It forms dimeric complexes.

It is found in the cellular thylakoid membrane. Functionally, one of the components of the core complex of photosystem II (PSII). PSII is a light-driven water:plastoquinone oxidoreductase that uses light energy to abstract electrons from H(2)O, generating O(2) and a proton gradient subsequently used for ATP formation. It consists of a core antenna complex that captures photons, and an electron transfer chain that converts photonic excitation into a charge separation. This subunit is found at the monomer-monomer interface. Involved in assembly of monomeric PSII from the CP43-less intermediate. This is Photosystem II reaction center protein M from Synechocystis sp. (strain ATCC 27184 / PCC 6803 / Kazusa).